The primary structure comprises 451 residues: Eukaryotic translation initiation factor 3 subunit E (451 aa).

A PCI domain is found at 245–425; sequence PFFNHEPARD…GTVVMNHPPS (181 aa).

Belongs to the eIF-3 subunit E family. As to quaternary structure, component of the eukaryotic translation initiation factor 3 (eIF-3) complex.

The protein resides in the cytoplasm. In terms of biological role, component of the eukaryotic translation initiation factor 3 (eIF-3) complex, which is involved in protein synthesis of a specialized repertoire of mRNAs and, together with other initiation factors, stimulates binding of mRNA and methionyl-tRNAi to the 40S ribosome. The eIF-3 complex specifically targets and initiates translation of a subset of mRNAs involved in cell proliferation. In Sclerotinia sclerotiorum (strain ATCC 18683 / 1980 / Ss-1) (White mold), this protein is Eukaryotic translation initiation factor 3 subunit E (int6).